A 61-amino-acid chain; its full sequence is Small ribosomal subunit protein uS14 (61 aa).

Zn(2+) contacts are provided by Cys24, Cys27, Cys40, and Cys43.

Belongs to the universal ribosomal protein uS14 family. Zinc-binding uS14 subfamily. As to quaternary structure, part of the 30S ribosomal subunit. Contacts proteins S3 and S10. Requires Zn(2+) as cofactor.

In terms of biological role, binds 16S rRNA, required for the assembly of 30S particles and may also be responsible for determining the conformation of the 16S rRNA at the A site. The polypeptide is Small ribosomal subunit protein uS14 (Campylobacter concisus (strain 13826)).